The following is a 366-amino-acid chain: NADH-quinone oxidoreductase subunit D (366 aa).

This sequence belongs to the complex I 49 kDa subunit family. In terms of assembly, NDH-1 is composed of 14 different subunits. Subunits NuoB, C, D, E, F, and G constitute the peripheral sector of the complex.

It is found in the cell membrane. The catalysed reaction is a quinone + NADH + 5 H(+)(in) = a quinol + NAD(+) + 4 H(+)(out). In terms of biological role, NDH-1 shuttles electrons from NADH, via FMN and iron-sulfur (Fe-S) centers, to quinones in the respiratory chain. The immediate electron acceptor for the enzyme in this species is believed to be a menaquinone. Couples the redox reaction to proton translocation (for every two electrons transferred, four hydrogen ions are translocated across the cytoplasmic membrane), and thus conserves the redox energy in a proton gradient. This chain is NADH-quinone oxidoreductase subunit D, found in Bacillus cereus (strain ZK / E33L).